We begin with the raw amino-acid sequence, 455 residues long: Bifunctional protein GlmU (455 aa).

A pyrophosphorylase region spans residues Met1–Arg226. Residues Leu8–Gly11, Lys22, Gln73, Gly78–Thr79, Tyr99–Asp101, Gly136, Glu151, Asn166, and Asn224 contribute to the UDP-N-acetyl-alpha-D-glucosamine site. A Mg(2+)-binding site is contributed by Asp101. Asn224 is a binding site for Mg(2+). The interval Arg227–Gln247 is linker. The interval Gly248–Ser455 is N-acetyltransferase. Positions 330 and 348 each coordinate UDP-N-acetyl-alpha-D-glucosamine. His360 serves as the catalytic Proton acceptor. UDP-N-acetyl-alpha-D-glucosamine contacts are provided by Tyr363 and Asn374. Residues Ala377, Asn383–Tyr384, Ser402, Ala420, and Arg437 contribute to the acetyl-CoA site.

The protein in the N-terminal section; belongs to the N-acetylglucosamine-1-phosphate uridyltransferase family. In the C-terminal section; belongs to the transferase hexapeptide repeat family. As to quaternary structure, homotrimer. Mg(2+) serves as cofactor.

It localises to the cytoplasm. It catalyses the reaction alpha-D-glucosamine 1-phosphate + acetyl-CoA = N-acetyl-alpha-D-glucosamine 1-phosphate + CoA + H(+). The enzyme catalyses N-acetyl-alpha-D-glucosamine 1-phosphate + UTP + H(+) = UDP-N-acetyl-alpha-D-glucosamine + diphosphate. It participates in nucleotide-sugar biosynthesis; UDP-N-acetyl-alpha-D-glucosamine biosynthesis; N-acetyl-alpha-D-glucosamine 1-phosphate from alpha-D-glucosamine 6-phosphate (route II): step 2/2. Its pathway is nucleotide-sugar biosynthesis; UDP-N-acetyl-alpha-D-glucosamine biosynthesis; UDP-N-acetyl-alpha-D-glucosamine from N-acetyl-alpha-D-glucosamine 1-phosphate: step 1/1. It functions in the pathway bacterial outer membrane biogenesis; LPS lipid A biosynthesis. In terms of biological role, catalyzes the last two sequential reactions in the de novo biosynthetic pathway for UDP-N-acetylglucosamine (UDP-GlcNAc). The C-terminal domain catalyzes the transfer of acetyl group from acetyl coenzyme A to glucosamine-1-phosphate (GlcN-1-P) to produce N-acetylglucosamine-1-phosphate (GlcNAc-1-P), which is converted into UDP-GlcNAc by the transfer of uridine 5-monophosphate (from uridine 5-triphosphate), a reaction catalyzed by the N-terminal domain. This Pseudomonas putida (strain ATCC 47054 / DSM 6125 / CFBP 8728 / NCIMB 11950 / KT2440) protein is Bifunctional protein GlmU.